The chain runs to 397 residues: Cystinosin (397 aa).

The first 24 residues, 1-24 (MDFSTHRLTTLLLLLLATVALGNA), serve as a signal peptide directing secretion. Over 25 to 126 (QSSQLTVDSH…FVRVTVAKSR (102 aa)) the chain is Lumenal. N-linked (GlcNAc...) asparagine glycosylation is found at Asn-43 and Asn-86. A helical transmembrane segment spans residues 127-147 (ALIYTSIIFGWVYFVAWSVSF). Positions 132 to 187 (SIIFGWVYFVAWSVSFYPQIWSNYRRKSVEGLNFDFLALNIVGFTLYSMFNCGLYF) constitute a PQ-loop 1 domain. Topologically, residues 148-167 (YPQIWSNYRRKSVEGLNFDF) are cytoplasmic. Residues 168–188 (LALNIVGFTLYSMFNCGLYFI) traverse the membrane as a helical segment. The Lumenal portion of the chain corresponds to 189 to 210 (EDLQNEYEVRYPLGVNPVMLND). A helical membrane pass occupies residues 211 to 231 (VVFSLHAMFATCITILQCFFY). The Cytoplasmic segment spans residues 232-239 (QRAQQRVS). A helical membrane pass occupies residues 240-260 (FIAYGILAIFAVVVVVSAGLA). Over 261–263 (GGS) the chain is Lumenal. A helical membrane pass occupies residues 264–284 (VIHWLDFLYYCSYVKLTITII). The region spanning 271 to 327 (LYYCSYVKLTITIIKYVPQALMNYRRKSTSGWSIGNILLDFTGGTLSMLQMILNAHN) is the PQ-loop 2 domain. Topologically, residues 285–302 (KYVPQALMNYRRKSTSGW) are cytoplasmic. The chain crosses the membrane as a helical span at residues 303-323 (SIGNILLDFTGGTLSMLQMIL). Over 324–340 (NAHNYDDWVSIFGDPTK) the chain is Lumenal. The helical transmembrane segment at 341 to 361 (FGLGLFSVLFDVFFMLQHYVF) threads the bilayer. At 362-397 (YRHSRESSSSDLTTVTDVQNRTNESPPPSEVTTEKY) the chain is on the cytoplasmic side. The segment covering 373–385 (LTTVTDVQNRTNE) has biased composition (polar residues). The disordered stretch occupies residues 373–397 (LTTVTDVQNRTNESPPPSEVTTEKY).

Belongs to the cystinosin family.

It localises to the lysosome membrane. It carries out the reaction L-cystine(out) + H(+)(out) = L-cystine(in) + H(+)(in). Cystine/H(+) symporter that mediates export of cystine, the oxidized dimer of cysteine, from lysosomes. Involved in cysteine homeostasis during periods of fasting, which indirectly regulates mTORC1-mediated signaling by supporting de novo CoA synthesis, the TCA cycle and amino acid metabolism during periods of food shortage. Important for maintaining autophagy, and for development and survival during periods of fasting. This Drosophila melanogaster (Fruit fly) protein is Cystinosin.